Here is a 760-residue protein sequence, read N- to C-terminus: Heat shock transcription factor (760 aa).

2 disordered regions span residues 1–132 (MIMN…PPVV) and 206–276 (FHPL…GPKT). Composition is skewed to polar residues over residues 19–31 (TESN…SSPS) and 38–88 (RSGT…SNKL). The span at 119 to 130 (DYKDSIDLDKPP) shows a compositional bias: basic and acidic residues. The span at 221 to 247 (AGPANNSQQQQQQQQQDSSIPSDGISS) shows a compositional bias: low complexity. Residues 276–385 (TRPAFVMKIW…EDLLDKIVRN (110 aa)) mediate DNA binding. The interval 414–467 (ELETIKMNQYVISEDLRRVRQDNKMLWQENYLNRERNQVQGRTLDKILKFLSVV) is involved in trimerization. Disordered stretches follow at residues 492–545 (TQYR…NNNN), 560–582 (LTNR…EGSI), 609–630 (HQPG…SAPS), and 674–760 (QEQH…VSDH). A compositionally biased stretch (polar residues) spans 515–539 (NSRFARDNNQTAQPTYESPLSTSDT). Residue Ser570 is modified to Phosphoserine. Thr574 carries the phosphothreonine modification. Ser576 carries the phosphoserine modification. The residue at position 577 (Thr577) is a Phosphothreonine. A compositionally biased stretch (low complexity) spans 613–628 (ATTNNNNHSSSTAISA). Residues 646 to 684 (RNLDDLEKHINKEGQSIQQVQDWIDKLAQEQHEKQQQQQ) adopt a coiled-coil conformation. 2 stretches are compositionally biased toward polar residues: residues 701–722 (ATTT…NISF) and 731–742 (PGSNVSSNINDS). The segment covering 744-760 (GNEKKSKKRSIEEVSDH) has biased composition (basic and acidic residues).

It belongs to the HSF family. Homotrimer. Homotrimerization increases the affinity of HSF1 to DNA. Interacts with HSP90. Activated by phosphorylation of at least Ser-570, Thr-574, Ser-576 and Thr-577 in response to heat shock. Additional unidentified residues are also phosphorylated in response to heat shock.

It localises to the nucleus. Functionally, DNA-binding transcription factor that specifically binds heat shock promoter elements (HSE) and activates transcription. With HSP90, is required for the modulation of the chaperone levels in response to growth temperature, rather than the activation of acute responses to sudden thermal transitions. Activated during infection and contributes to full virulence. In Candida albicans (strain SC5314 / ATCC MYA-2876) (Yeast), this protein is Heat shock transcription factor.